The sequence spans 701 residues: Peptide transporter 3 (701 aa).

9 consecutive transmembrane segments (helical) span residues 29 to 49 (FSFY…HEFS), 55 to 75 (FIYH…SIMA), 91 to 111 (IYVV…SYPI), 119 to 139 (GLFV…AFAA), 154 to 174 (FSFF…ITPI), 188 to 208 (FPLA…LFLM), 269 to 289 (GLLN…LFDQ), 318 to 338 (INPV…YPAL), and 351 to 371 (AVGG…QLKV). N-linked (GlcNAc...) asparagine glycosylation is found at asparagine 391 and asparagine 432. The next 3 helical transmembrane spans lie at 575–595 (ILWS…LSVT), 611–631 (VLTA…MMIS), and 641–661 (LEFF…ILLA).

This sequence belongs to the major facilitator superfamily. Proton-dependent oligopeptide transporter (POT/PTR) (TC 2.A.17) family. Expressed in the AVA interneuron.

It is found in the membrane. In terms of biological role, neuron-specific, H(+)-coupled oligopeptide transporter with broad specificity towards di- and tripeptides in a Na(+) and Cl(-)-independent manner. Shows H(+) channel activity in the absence of peptide substrates. The chain is Peptide transporter 3 (pept-3) from Caenorhabditis elegans.